The chain runs to 636 residues: Threonine--tRNA ligase (636 aa).

The region spanning 1-61 (MLKITLKDGS…NENCEVEILS (61 aa)) is the TGS domain. The tract at residues 244 to 534 (EHRKLGKELD…LIEHYEGKFP (291 aa)) is catalytic. Zn(2+)-binding residues include C335, H386, and H511.

The protein belongs to the class-II aminoacyl-tRNA synthetase family. In terms of assembly, homodimer. It depends on Zn(2+) as a cofactor.

It is found in the cytoplasm. It carries out the reaction tRNA(Thr) + L-threonine + ATP = L-threonyl-tRNA(Thr) + AMP + diphosphate + H(+). Functionally, catalyzes the attachment of threonine to tRNA(Thr) in a two-step reaction: L-threonine is first activated by ATP to form Thr-AMP and then transferred to the acceptor end of tRNA(Thr). Also edits incorrectly charged L-seryl-tRNA(Thr). This Natranaerobius thermophilus (strain ATCC BAA-1301 / DSM 18059 / JW/NM-WN-LF) protein is Threonine--tRNA ligase.